We begin with the raw amino-acid sequence, 203 residues long: MQPVRFGSPWIMAIGLVLLLLAFVSAGKSRQRSPANCPTIKLKRQWGGKPSLGLHYQVRPIRYVVIHHTVTGECSGLLKCAEILQNMQAYHQNELDFNDISYNFLIGNDGIVYEGTGWGLRGAHTYGYNAIGTGIAFIGNFVDKLPSDAALQAAKDLLACGVQQGELSEDYALIAGSQVISTQSPGLTLYNEIQEWPHWLSNP.

Residues 1-26 form the signal peptide; that stretch reads MQPVRFGSPWIMAIGLVLLLLAFVSA. Cystine bridges form between cysteine 37-cysteine 160 and cysteine 74-cysteine 80. The N-acetylmuramoyl-L-alanine amidase domain occupies 59-186; sequence RPIRYVVIHH…SQVISTQSPG (128 aa). Peptidoglycan binding regions lie at residues 87–90 and 97–102; these read MQAY and FNDISY.

Belongs to the N-acetylmuramoyl-L-alanine amidase 2 family. In terms of tissue distribution, in larvae, it is expressed in fat body. Also expressed in uninduced hemocytes and mbn-2 cells.

It localises to the secreted. It carries out the reaction N-acetyl-D-glucosaminyl-N-acetylmuramoyl-L-alanyl-meso-2,6-diaminoheptanedioyl-D-alanine + H2O = N-acetyl-D-glucosaminyl-N-acetylmuramoyl-L-alanyl-meso-2,6-diaminoheptanedioate + D-alanine. In terms of biological role, peptidoglycan-recognition protein that plays a key role in innate immunity by binding to peptidoglycans (PGN) of Gram-positive bacteria and activating the Toll pathway upstream of spz activating enzyme SPE. Has no activity against Gram-negative bacteria and fungi. Shows some partial redundancy with PRPGP-SD in Gram-positive bacteria recognition. May act by forming a complex with GNBP1 that activates the proteolytic cleavage of Spatzle and the subsequent activation of Toll pathway. Binds to diaminopimelic acid-type tetrapeptide PGN (DAP-type PGN) and lysine-type PGN (Lys-type PGN). Has some L,D-carboxypeptidase activity for DAP-type PGN, which are specific to prokaryotes, but not for Lys-type PGN. In Drosophila melanogaster (Fruit fly), this protein is Peptidoglycan-recognition protein SA (PGRP-SA).